The following is a 257-amino-acid chain: Ribosome maturation factor RimP (257 aa).

Residues L182–H257 are disordered. The segment covering D191 to A205 has biased composition (acidic residues). Over residues K224–R236 the composition is skewed to low complexity.

It belongs to the RimP family.

It is found in the cytoplasm. Required for maturation of 30S ribosomal subunits. The chain is Ribosome maturation factor RimP from Methylobacterium radiotolerans (strain ATCC 27329 / DSM 1819 / JCM 2831 / NBRC 15690 / NCIMB 10815 / 0-1).